The primary structure comprises 745 residues: Bacteriophage N4 adsorption protein B (745 aa).

3 helical membrane passes run 8-28, 362-382, and 393-413; these read FATW…IMFI, ISNF…LLLA, and FLSI…NFGL.

Its subcellular location is the cell inner membrane. Its function is as follows. Required for bacteriophage N4 adsorption. May be a component of the phage receptor. The protein is Bacteriophage N4 adsorption protein B (nfrB) of Escherichia coli O157:H7.